Reading from the N-terminus, the 305-residue chain is N-acetyl-D-glucosamine kinase (305 aa).

ATP contacts are provided by residues 4–11 (GFDIGGTK) and 133–140 (GFGGGLVF). Zn(2+) is bound by residues H157, C178, C180, and C185.

It belongs to the ROK (NagC/XylR) family. NagK subfamily.

It catalyses the reaction N-acetyl-D-glucosamine + ATP = N-acetyl-D-glucosamine 6-phosphate + ADP + H(+). The protein operates within cell wall biogenesis; peptidoglycan recycling. Functionally, catalyzes the phosphorylation of N-acetyl-D-glucosamine (GlcNAc) derived from cell-wall degradation, yielding GlcNAc-6-P. The chain is N-acetyl-D-glucosamine kinase from Histophilus somni (strain 129Pt) (Haemophilus somnus).